The chain runs to 611 residues: CRS2-associated factor 2, chloroplastic (611 aa).

A chloroplast-targeting transit peptide spans 1–58; that stretch reads MPPPPPQRPASSHVGRANLFSASPPPLSNRRYPHHRSLPLPPVSPRRRDPKKHSQQPS. A disordered region spans residues 1–72; it reads MPPPPPQRPA…TDSGPTRTVT (72 aa). Residues 55–72 show a composition bias toward polar residues; that stretch reads QQPSQEEPTDSGPTRTVT. 2 consecutive CRM domains span residues 232-328 and 350-446; these read EPLT…TRPR and DGFT…YSKP. The CRS2 binding stretch occupies residues 486–509; sequence KMFKLWKSAVDSSLALLLDDAEAN. Residues 554-578 are disordered; it reads MNDEPETSVAGNEEGQLEQSPDLRD.

As to quaternary structure, interacts with CRS2 and RNA. Part of large ribonucleo-protein complexes that include group IIB introns, CRS2 and CAF2.

The protein localises to the plastid. Its subcellular location is the chloroplast stroma. Functionally, required for the splicing of group IIB introns in chloroplasts. Forms splicing particles with CRS2. Interacts with RNA and confers intron specificity of the splicing particles. This chain is CRS2-associated factor 2, chloroplastic (CAF2), found in Zea mays (Maize).